The following is a 443-amino-acid chain: tRNA modification GTPase MnmE (443 aa).

The (6S)-5-formyl-5,6,7,8-tetrahydrofolate site is built by R19, E78, and K118. One can recognise a TrmE-type G domain in the interval 214–366 (GFKIAIIGPT…LISKIKNKLK (153 aa)). N224 contacts K(+). Residues 224–229 (NAGKSS), 243–249 (SEIAGTT), and 268–271 (DTAG) contribute to the GTP site. S228 lines the Mg(2+) pocket. Positions 243, 245, and 248 each coordinate K(+). A Mg(2+)-binding site is contributed by T249. K443 is a (6S)-5-formyl-5,6,7,8-tetrahydrofolate binding site.

This sequence belongs to the TRAFAC class TrmE-Era-EngA-EngB-Septin-like GTPase superfamily. TrmE GTPase family. As to quaternary structure, homodimer. Heterotetramer of two MnmE and two MnmG subunits. It depends on K(+) as a cofactor.

It localises to the cytoplasm. Its function is as follows. Exhibits a very high intrinsic GTPase hydrolysis rate. Involved in the addition of a carboxymethylaminomethyl (cmnm) group at the wobble position (U34) of certain tRNAs, forming tRNA-cmnm(5)s(2)U34. In Pelagibacter ubique (strain HTCC1062), this protein is tRNA modification GTPase MnmE.